A 2319-amino-acid chain; its full sequence is A-kinase anchor protein 6 (2319 aa).

2 stretches are compositionally biased toward polar residues: residues 1 to 12 and 324 to 339; these read MLTMSVTLSPLR and GVSS…AAQP. 5 disordered regions span residues 1 to 24, 301 to 369, 493 to 532, 566 to 614, and 691 to 757; these read MLTM…TDAS, VDDK…NATP, SRLK…VPNG, LQLQ…PSHV, and TRLG…SATK. The span at 340-351 shows a compositional bias: low complexity; that stretch reads SSETVQQESSSS. Polar residues-rich tracts occupy residues 518 to 532 and 566 to 591; these read GKQA…VPNG and LQLQ…SDNI. Positions 697 to 711 are enriched in low complexity; it reads SPSSSSDIASSLGES. Residues 735–754 are compositionally biased toward basic and acidic residues; it reads KYADEKSERASSSEKNESHS. Spectrin repeat units lie at residues 762-848 and 1036-1150; these read QKLM…QLLE and EKVD…LLDD. Position 1073 is a phosphoserine (Ser-1073). The interval 1250–1272 is disordered; the sequence is KLGETSNEDPGYDEEADNHGGSQ. The span at 1255–1265 shows a compositional bias: acidic residues; sequence SNEDPGYDEEA. Phosphoserine is present on residues Ser-1570 and Ser-1595. Disordered regions lie at residues 1821–1842, 1900–1925, and 1963–1983; these read VSDE…PSDT, EGIP…SHGK, and KCPN…TEKS. 3 stretches are compositionally biased toward polar residues: residues 1830 to 1842, 1911 to 1920, and 1972 to 1982; these read DISS…PSDT, NVTSKVSENL, and NQSTASTPTEK. Positions 2063 to 2076 are PKA-RII subunit binding domain; the sequence is IIDMASTALKSKSQ. The segment covering 2198-2215 has biased composition (low complexity); it reads FSDSSLSADDADTVALSS. A disordered region spans residues 2198-2319; that stretch reads FSDSSLSADD…HEKRHRNMHR (122 aa).

As to quaternary structure, interacts with RII subunit of PKA, phosphatase 2B (calcineurin) and AKAP79. Interacts with SYNPO2. In terms of tissue distribution, highly expressed in cardiac and skeletal muscle, followed by brain.

The protein resides in the sarcoplasmic reticulum. It localises to the nucleus membrane. Functionally, binds to type II regulatory subunits of protein kinase A and anchors/targets them to the nuclear membrane or sarcoplasmic reticulum. May act as an adapter for assembling multiprotein complexes. The sequence is that of A-kinase anchor protein 6 (AKAP6) from Homo sapiens (Human).